Consider the following 473-residue polypeptide: Deoxyribodipyrimidine photo-lyase (473 aa).

The Photolyase/cryptochrome alpha/beta domain occupies 2-134 (PTHLVWFRRD…ICEGFDDSVI (133 aa)). Asparagine 109 and glutamate 110 together coordinate (6R)-5,10-methylene-5,6,7,8-tetrahydrofolate. FAD is bound at residue tyrosine 224. Arginine 228 is a binding site for DNA. An FAD-binding site is contributed by 236-240 (TSRLS). Interaction with DNA regions lie at residues 276-283 (ELIWREFY) and 343-344 (NR). 374–376 (DGD) provides a ligand contact to FAD. Residue glutamine 406 participates in DNA binding.

Belongs to the DNA photolyase class-1 family. Monomer. Requires FAD as cofactor. The cofactor is (6R)-5,10-methylene-5,6,7,8-tetrahydrofolate.

It catalyses the reaction cyclobutadipyrimidine (in DNA) = 2 pyrimidine residues (in DNA).. Functionally, involved in repair of UV radiation-induced DNA damage. Catalyzes the light-dependent monomerization (300-600 nm) of cyclobutyl pyrimidine dimers (in cis-syn configuration), which are formed between adjacent bases on the same DNA strand upon exposure to ultraviolet radiation. The polypeptide is Deoxyribodipyrimidine photo-lyase (phrB) (Salmonella typhimurium (strain LT2 / SGSC1412 / ATCC 700720)).